We begin with the raw amino-acid sequence, 538 residues long: Bifunctional purine biosynthesis protein PurH (538 aa).

The MGS-like domain maps to 8 to 158 (IPAPDLVPVR…KNHAYVAIVT (151 aa)).

Belongs to the PurH family.

It carries out the reaction (6R)-10-formyltetrahydrofolate + 5-amino-1-(5-phospho-beta-D-ribosyl)imidazole-4-carboxamide = 5-formamido-1-(5-phospho-D-ribosyl)imidazole-4-carboxamide + (6S)-5,6,7,8-tetrahydrofolate. It catalyses the reaction IMP + H2O = 5-formamido-1-(5-phospho-D-ribosyl)imidazole-4-carboxamide. It participates in purine metabolism; IMP biosynthesis via de novo pathway; 5-formamido-1-(5-phospho-D-ribosyl)imidazole-4-carboxamide from 5-amino-1-(5-phospho-D-ribosyl)imidazole-4-carboxamide (10-formyl THF route): step 1/1. It functions in the pathway purine metabolism; IMP biosynthesis via de novo pathway; IMP from 5-formamido-1-(5-phospho-D-ribosyl)imidazole-4-carboxamide: step 1/1. This is Bifunctional purine biosynthesis protein PurH from Mesorhizobium japonicum (strain LMG 29417 / CECT 9101 / MAFF 303099) (Mesorhizobium loti (strain MAFF 303099)).